The following is a 1031-amino-acid chain: Sister chromatid cohesion 1 protein 4 (1031 aa).

The tract at residues 461–481 (TPDKEDPGTCNDDAGNNNITG) is disordered. The Nuclear localization signal motif lies at 545–552 (TKRLRSAP). Disordered regions lie at residues 661–703 (VEEN…EELK), 742–772 (EKLD…ADPN), and 803–835 (ELPH…VGST). Composition is skewed to basic and acidic residues over residues 742–762 (EKLD…HDGE) and 803–825 (ELPH…RDDQ).

This sequence belongs to the rad21 family. Component of the cohesin complex. As to expression, expressed in tissues containing dividing cells such as seedlings, flower buds, flowers and inflorescence meristem tissue.

The protein localises to the nucleus. It localises to the chromosome. It is found in the centromere. Involved in sister chromatid and centromere cohesion during mitosis. This chain is Sister chromatid cohesion 1 protein 4 (SYN4), found in Arabidopsis thaliana (Mouse-ear cress).